We begin with the raw amino-acid sequence, 298 residues long: N-acetylmuramic acid 6-phosphate etherase (298 aa).

The SIS domain maps to 55–218 (IHTQVSGGGR…STGLMIKSGK (164 aa)). Glutamate 83 serves as the catalytic Proton donor. The active site involves glutamate 114.

This sequence belongs to the GCKR-like family. MurNAc-6-P etherase subfamily. In terms of assembly, homodimer.

It catalyses the reaction N-acetyl-D-muramate 6-phosphate + H2O = N-acetyl-D-glucosamine 6-phosphate + (R)-lactate. Its pathway is amino-sugar metabolism; 1,6-anhydro-N-acetylmuramate degradation. It participates in amino-sugar metabolism; N-acetylmuramate degradation. It functions in the pathway cell wall biogenesis; peptidoglycan recycling. Its function is as follows. Specifically catalyzes the cleavage of the D-lactyl ether substituent of MurNAc 6-phosphate, producing GlcNAc 6-phosphate and D-lactate. Together with AnmK, is also required for the utilization of anhydro-N-acetylmuramic acid (anhMurNAc) either imported from the medium or derived from its own cell wall murein, and thus plays a role in cell wall recycling. The sequence is that of N-acetylmuramic acid 6-phosphate etherase from Escherichia coli O1:K1 / APEC.